Reading from the N-terminus, the 97-residue chain is Large ribosomal subunit protein bL21 (97 aa).

This sequence belongs to the bacterial ribosomal protein bL21 family. As to quaternary structure, part of the 50S ribosomal subunit. Contacts protein L20.

Its function is as follows. This protein binds to 23S rRNA in the presence of protein L20. This chain is Large ribosomal subunit protein bL21, found in Persephonella marina (strain DSM 14350 / EX-H1).